Reading from the N-terminus, the 152-residue chain is Ribosomal RNA large subunit methyltransferase H (152 aa).

S-adenosyl-L-methionine is bound by residues leucine 71, glycine 101, and 120-125; that span reads LSKLTF.

It belongs to the RNA methyltransferase RlmH family. In terms of assembly, homodimer.

It is found in the cytoplasm. It catalyses the reaction pseudouridine(1915) in 23S rRNA + S-adenosyl-L-methionine = N(3)-methylpseudouridine(1915) in 23S rRNA + S-adenosyl-L-homocysteine + H(+). Functionally, specifically methylates the pseudouridine at position 1915 (m3Psi1915) in 23S rRNA. The chain is Ribosomal RNA large subunit methyltransferase H from Thermosipho melanesiensis (strain DSM 12029 / CIP 104789 / BI429).